The following is a 306-amino-acid chain: Agmatinase (306 aa).

Mn(2+) is bound by residues His126, Asp149, His151, Asp153, Asp230, and Asp232.

It belongs to the arginase family. Agmatinase subfamily. Mn(2+) serves as cofactor.

The catalysed reaction is agmatine + H2O = urea + putrescine. It functions in the pathway amine and polyamine biosynthesis; putrescine biosynthesis via agmatine pathway; putrescine from agmatine: step 1/1. Catalyzes the formation of putrescine from agmatine. The chain is Agmatinase from Serratia proteamaculans (strain 568).